Here is a 738-residue protein sequence, read N- to C-terminus: MADTQYILPNDIGVSSLDCREAFRLLSPTERLYAHHLSRAAWYGGLAVLLQTSPEAPYIYALLSRLFRAQDPDQLRQHALAEGLTEEEYQAFLVYAAGVYSNMGNYKSFGDTKFVPNLPKDKLGRVILGSKAAQQRPEEVRDLWQTCGDLMFSLEPRLRHLGLGKEGVTTYFSGDCTMEDAKLAQDFLDSQNLSAYNTRLFKVVGQEGKSHYEVRLASVLNTDPALDSELTSKLKRYEFQGNHFQVTRGDYAPILQKVVEHLEKAKAYAANSHQEQMLAQYVESFTQGSIEAHKRGSRFWIQDKGPIVESYIGFIESYRDPFGSRGEFEGFVAMVNKAMSAKFERLVASAEQLLKELPWPLAFEKDKFLTPDFTSLDVLTFAGSGIPAGINIPNYDDLRQTEGFKNVSLGNVLAVAYAAKREKLTFLEEEDKDLYIRWKGPSFDVQVGLHELLGHGSGKLFVQDEKGAFNFDKETVINPETGEQIQSWYRSGETWDSKFSTIASSYEECRAESVGLYLCLNPQVLEIFGFEGADAEDVIYVNWLNMVRAGLLALEFYTPEAANWRQAHMQARFVILRVLLEAGEGLVTVTPTTGSDGRPDARVRLDRSKIRSVGRPALERFLRRLQVLKSTGDVVAGRALYEGYAAVTDAPPECFLTLRDTVLLRKESRKLIVQPNTRLEGSEVQLVEYEASAAGLIRSFCERFPEDGPELEEVLIQLAAADARFWRNQAQEAPPGQA.

Residue Ala-2 is modified to N-acetylalanine. His-450 serves as a coordination point for Zn(2+). The active site involves Glu-451. 2 residues coordinate Zn(2+): His-455 and Glu-508.

The protein belongs to the peptidase M49 family. Zn(2+) serves as cofactor.

It localises to the cytoplasm. Its subcellular location is the cytosol. It catalyses the reaction Release of an N-terminal dipeptide from a peptide comprising four or more residues, with broad specificity. Also acts on dipeptidyl 2-naphthylamides.. In terms of biological role, cleaves and degrades bioactive peptides, including angiotensin, Leu-enkephalin and Met-enkephalin. Also cleaves Arg-Arg-beta-naphthylamide (in vitro). The protein is Dipeptidyl peptidase 3 (Dpp3) of Mus musculus (Mouse).